The chain runs to 206 residues: Superoxide dismutase [Mn] (206 aa).

Mn(2+) contacts are provided by histidine 27, histidine 82, aspartate 168, and histidine 172.

Belongs to the iron/manganese superoxide dismutase family. Homodimer. The cofactor is Mn(2+).

It catalyses the reaction 2 superoxide + 2 H(+) = H2O2 + O2. Its function is as follows. Destroys superoxide anion radicals which are normally produced within the cells and which are toxic to biological systems. This is Superoxide dismutase [Mn] (sodA) from Salmonella typhimurium (strain LT2 / SGSC1412 / ATCC 700720).